Reading from the N-terminus, the 464-residue chain is uncharacterized protein (464 aa).

Disordered stretches follow at residues 290 to 374 (YRKQ…ERPK) and 445 to 464 (ETDDEDEENQYSEAEKPLEE). The span at 293–302 (QQQWQQQQQQ) shows a compositional bias: low complexity. Residues 303–318 (RKVKTPIKKQEAKKKA) show a composition bias toward basic residues. Polar residues predominate over residues 352–367 (DMKQQQQMEKGTTSKQ). Acidic residues predominate over residues 445 to 454 (ETDDEDEENQ).

This is an uncharacterized protein from Macaca fascicularis (Crab-eating macaque).